The chain runs to 679 residues: Glycine--tRNA ligase beta subunit (679 aa).

This sequence belongs to the class-II aminoacyl-tRNA synthetase family. Tetramer of two alpha and two beta subunits.

Its subcellular location is the cytoplasm. The catalysed reaction is tRNA(Gly) + glycine + ATP = glycyl-tRNA(Gly) + AMP + diphosphate. The chain is Glycine--tRNA ligase beta subunit from Streptococcus mutans serotype c (strain ATCC 700610 / UA159).